Reading from the N-terminus, the 171-residue chain is Adenine phosphoribosyltransferase (171 aa).

This sequence belongs to the purine/pyrimidine phosphoribosyltransferase family. In terms of assembly, homodimer.

The protein resides in the cytoplasm. It carries out the reaction AMP + diphosphate = 5-phospho-alpha-D-ribose 1-diphosphate + adenine. It participates in purine metabolism; AMP biosynthesis via salvage pathway; AMP from adenine: step 1/1. In terms of biological role, catalyzes a salvage reaction resulting in the formation of AMP, that is energically less costly than de novo synthesis. The protein is Adenine phosphoribosyltransferase of Christiangramia forsetii (strain DSM 17595 / CGMCC 1.15422 / KT0803) (Gramella forsetii).